An 84-amino-acid chain; its full sequence is CDC42 small effector protein 2-A (84 aa).

Residues cysteine 10 and cysteine 11 are each lipidated (S-palmitoyl cysteine). One can recognise a CRIB domain in the interval 29-42 (IGEPTNFVHTAHVG).

The protein belongs to the CDC42SE/SPEC family.

The protein localises to the cytoplasm. It localises to the cytoskeleton. The protein resides in the cell membrane. Probably involved in the organization of the actin cytoskeleton by acting downstream of CDC42, inducing actin filament assembly. This Xenopus tropicalis (Western clawed frog) protein is CDC42 small effector protein 2-A (cdc42se2-A).